Reading from the N-terminus, the 505-residue chain is Metal transporter Nramp3.2 (505 aa).

Transmembrane regions (helical) follow at residues 50 to 70, 78 to 98, 127 to 147, 159 to 179, 187 to 207, 233 to 253, 280 to 300, 321 to 341, 369 to 389, 400 to 420, 439 to 459, and 466 to 486; these read LWLF…PGNL, AIAG…GLLV, MVLW…EVIG, FVPL…FLFL, LEAV…WMFA, AVGV…SALV, ALVI…KGFY, YGGG…AAGQ, ALIT…VFDT, WLNV…LCLV, AWLV…DFFF, and AFTT…IYLI.

It belongs to the NRAMP (TC 2.A.55) family. In terms of tissue distribution, expressed in roots, stems, buds and leaves.

It localises to the vacuole membrane. The enzyme catalyses Mn(2+)(in) = Mn(2+)(out). It catalyses the reaction Fe(2+)(in) = Fe(2+)(out). In terms of biological role, divalent metal transporter. Can transport manganese (Mn) and iron (Fe). Involved in the release of metals stored in the vacuole. This Populus trichocarpa (Western balsam poplar) protein is Metal transporter Nramp3.2.